The following is a 1557-amino-acid chain: DVA-1 polyprotein (1557 aa).

The first 21 residues, 1–21 (MKSTSFITLLLLSYFIVEAHS), serve as a signal peptide directing secretion. The propeptide occupies 22 to 60 (SIFHWDDERLFKHDDTHSWLTDVQKAELETLKHQPIQLR). Asn-997 carries N-linked (GlcNAc...) asparagine glycosylation.

It belongs to the NPA family. In terms of processing, nematode polyprotein allergens (NPAs) are synthesized as large polypeptides that are subsequently proteolytically cleaved to active polypeptide units.

Has high binding affinity for fatty acids and retinoids. The protein is DVA-1 polyprotein (DVA-1) of Dictyocaulus viviparus (Bovine lungworm).